The sequence spans 907 residues: Avirulence protein A (907 aa).

Polar residues-rich tracts occupy residues 1 to 11 and 124 to 136; these read MWNVSKSSNNL and AGSNGDINKSSDP. 2 disordered regions span residues 1–47 and 116–157; these read MWNV…HDQL and NDDF…KKSY.

The chain is Avirulence protein A (avrA) from Pseudomonas savastanoi pv. glycinea (Pseudomonas syringae pv. glycinea).